A 591-amino-acid chain; its full sequence is CTP synthase 1-B (591 aa).

Residues 300–554 form the Glutamine amidotransferase type-1 domain; that stretch reads SIALVGKYTK…LASVGRLSQY (255 aa). Catalysis depends on for GATase activity residues cysteine 399, histidine 526, and glutamate 528. The span at 562–572 shows a compositional bias: basic and acidic residues; the sequence is SPRDTYSDRSE. Residues 562 to 581 are disordered; it reads SPRDTYSDRSENSSPDAEIA.

This sequence belongs to the CTP synthase family.

It carries out the reaction UTP + L-glutamine + ATP + H2O = CTP + L-glutamate + ADP + phosphate + 2 H(+). Its pathway is pyrimidine metabolism; CTP biosynthesis via de novo pathway; CTP from UDP: step 2/2. Functionally, this enzyme is involved in the de novo synthesis of CTP, a precursor of DNA, RNA and phospholipids. Catalyzes the ATP-dependent amination of UTP to CTP with either L-glutamine or ammonia as a source of nitrogen. This is CTP synthase 1-B (ctps1-b) from Xenopus laevis (African clawed frog).